Reading from the N-terminus, the 920-residue chain is MTAEETVNVKEVEIIKLILDFLNSKKLHISMLALEKESGVINGLFSDDMLFLRQLILDGQWDEVLQFIQPLECMEKFDKKRFRYIILKQKFLEALCVNNAMSAEDEPQHLEFTMQEAVQCLHALEEYCPSKDDYSKLCLLLTLPRLTNHAEFKDWNPSTARVHCFEEVCVMVAEFIPADRKLSEAGFKASNNRLFQLVMKGLLYECCVEFCQSKATGEEITESEVLLGIDLLCGNGCDDLDLSLLSWLQNLPSSVFSCAFEQKMLNIHVDKLLKPTKAAYADLLTPLISKLSPYPSSPMRRPQSADAYMTRSLNPALDGLTCGLTSHDKRISDLGNKTSPMSHSFANFHYPGVQNLSRSLMLENTECHSIYEESPERSDTPVEAQQPVSSEAMCQGSGLEKEPANGAQNPVPAKQEKNELRDSTEQFQEYYRQRLRYQQHLEQKEQQRQMYQQMLLEGGVNQEDGPDQQQNLTEQFLNRSIQKLGELNIGMDSLGNEVPVLNQQCSGSKNNGSNNSSVTSFSTPPQDSSQRLIHDTANIHTSTPRNPGSTNHIPFHEDSPCGSQNSSEHSVIKPSPGDSSGNLSRSKGEEDDKSKKQFVCINTLEDTQAVRAVAFHPSGSLYAVGSNSKTLRVCAYPEKMDASAHDNPKQPVVRFKRNKHHKGSIYCVAWSPCGQLLATGSNDKYVKVLPFNAETCNATGPDLEFSMHDGTIRDLAFMEGPESGGAILISAGAGDCNIYTTDCQRGQGLHALSGHTGHILALYTWSGWMIASGSQDKTVRFWDLRVPSCVRVVGTTFHGTGSAVASVAVDPSGRLLATGQEDSSCMLYDIRGGRMVQSYHPHSSDVRSVRFSPGAHYLLTGSYDMKIKVTDLQGDLTKQLPLMVVGEHKDKVIQCRWHTQDLSFLSSSADRTVTLWTYSG.

A LisH domain is found at K10–N42. Residues F45–S102 enclose the CTLH domain. The residue at position 285 (T285) is a Phosphothreonine. Phosphoserine occurs at positions 289, 292, 297, and 312. The span at Y371 to T380 shows a compositional bias: basic and acidic residues. The interval Y371–D422 is disordered. S423 carries the post-translational modification Phosphoserine. Residues L501 to S594 form a disordered region. Low complexity predominate over residues S506–T523. Residues N538–H552 show a composition bias toward polar residues. T543 carries the post-translational modification Phosphothreonine. WD repeat units lie at residues E605–A644, H660–T699, M707–L749, G754–V792, G799–S838, P841–L880, and E887–S919.

As to quaternary structure, interacts with MAP1S (via WD repeats). In terms of tissue distribution, enriched in the nervous system (at protein level).

It is found in the cytoplasm. Its subcellular location is the cytoskeleton. The protein is WD repeat-containing protein 47 (Wdr47) of Mus musculus (Mouse).